A 937-amino-acid chain; its full sequence is Outer membrane usher protein CS3-2 (937 aa).

It belongs to the fimbrial export usher family. Post-translationally, a 97 kDa form of the protein is thought to be due to post-translational processing of isoform 104 kDa.

It is found in the cell outer membrane. Functionally, these proteins are essential for the biogenesis of mature CS3 pili, but not for synthesis of the CS3 pilin subunit. The protein is Outer membrane usher protein CS3-2 of Escherichia coli.